Consider the following 378-residue polypeptide: mRNA cap guanine-N(7) methyltransferase (378 aa).

One can recognise an mRNA cap 0 methyltransferase domain in the interval 24 to 331; sequence SRIFFMRNMN…MYLVFGFRKK (308 aa). Position 33–34 (33–34) interacts with mRNA; that stretch reads NN. Residues K37, A62, D84, D116, Q138, and Y143 each contribute to the S-adenosyl-L-methionine site. Basic and acidic residues-rich tracts occupy residues 335–347 and 356–378; these read EKNL…EIKK and DTDK…PSHC. The disordered stretch occupies residues 335 to 378; that stretch reads EKNLESEAPEIKKVTPVPLNEDTDKTAEKNEERIEEKEENPSHC.

This sequence belongs to the class I-like SAM-binding methyltransferase superfamily. mRNA cap 0 methyltransferase family.

The protein localises to the nucleus. It carries out the reaction a 5'-end (5'-triphosphoguanosine)-ribonucleoside in mRNA + S-adenosyl-L-methionine = a 5'-end (N(7)-methyl 5'-triphosphoguanosine)-ribonucleoside in mRNA + S-adenosyl-L-homocysteine. MRNA-capping methyltransferase that methylates the N7 position of the added guanosine to the 5'-cap structure of mRNAs. Binds RNA containing 5'-terminal GpppC. The protein is mRNA cap guanine-N(7) methyltransferase of Caenorhabditis briggsae.